The primary structure comprises 225 residues: Putative adhesin RT0816 (225 aa).

A signal peptide spans 1–22 (MKKLLLIAATSATILSSSISFA).

This Rickettsia typhi (strain ATCC VR-144 / Wilmington) protein is Putative adhesin RT0816.